The following is a 377-amino-acid chain: MSSLNIKQGSDAHFPDYPLASPSNNEIDLLNLISVLWRAKKTVMAVVFAFACAGLLISFILPQKWTSAAVVTPPEPVQWQELEKSFTKLRVLDLDIKIDRTEAFNLFIKKFQSVSLLEEYLRSSPYVMDQLKEAKIDELDLHRAIVALSEKMKAVDDNASKKKDEPSLYTSWTLSFTAPTSEEAQTVLSGYIDYISTLVVKESLENVRNKLEIKTQFEKEKLAQDRIKTKNQLDANIQRLNYSLDIANAAGIKKPVYSNGQAVKDDPDFSISLGADGIERKLEIEKAVTDVAELNGELRNRQYLVEQLTKAHVNDVNFTPFKYQLSPSLPVKKDGPGKAIIVILSALIGGMVACGGVLLRYAMASRKQDAMMADHLV.

Residues 1-41 (MSSLNIKQGSDAHFPDYPLASPSNNEIDLLNLISVLWRAKK) lie on the Cytoplasmic side of the membrane. A helical transmembrane segment spans residues 42 to 62 (TVMAVVFAFACAGLLISFILP). Residues 63–338 (QKWTSAAVVT…LPVKKDGPGK (276 aa)) are Periplasmic-facing. A helical transmembrane segment spans residues 339–359 (AIIVILSALIGGMVACGGVLL). Residues 360–377 (RYAMASRKQDAMMADHLV) lie on the Cytoplasmic side of the membrane.

This sequence belongs to the WzzB/Cld/Rol family.

Its subcellular location is the cell inner membrane. Its function is as follows. Part of the ferric enterobactin transport system. In Escherichia coli (strain K12), this protein is Ferric enterobactin transport protein FepE (fepE).